We begin with the raw amino-acid sequence, 294 residues long: Agamous-like MADS-box protein AGL82 (294 aa).

Residues 1 to 51 form the MADS-box domain; it reads MVPKVVDLQRIANDKTRITTYKKRKASLYKKAQEFSTLCGVETCLIVYGPT.

Interacts with MEE14/CBP1.

Its subcellular location is the nucleus. Probable transcription factor that may function in the maintenance of the proper function of the central cell in pollen tube attraction. The sequence is that of Agamous-like MADS-box protein AGL82 from Arabidopsis thaliana (Mouse-ear cress).